A 219-amino-acid polypeptide reads, in one-letter code: 3,4-dihydroxy-2-butanone 4-phosphate synthase (219 aa).

Residues 37–38 (RE), Asp-42, 150–154 (RRGHT), and Glu-174 each bind D-ribulose 5-phosphate. Residue Glu-38 coordinates Mg(2+). A Mg(2+)-binding site is contributed by His-153.

Belongs to the DHBP synthase family. In terms of assembly, homodimer. Mg(2+) is required as a cofactor. It depends on Mn(2+) as a cofactor.

The catalysed reaction is D-ribulose 5-phosphate = (2S)-2-hydroxy-3-oxobutyl phosphate + formate + H(+). It functions in the pathway cofactor biosynthesis; riboflavin biosynthesis; 2-hydroxy-3-oxobutyl phosphate from D-ribulose 5-phosphate: step 1/1. Functionally, catalyzes the conversion of D-ribulose 5-phosphate to formate and 3,4-dihydroxy-2-butanone 4-phosphate. In Oleidesulfovibrio alaskensis (strain ATCC BAA-1058 / DSM 17464 / G20) (Desulfovibrio alaskensis), this protein is 3,4-dihydroxy-2-butanone 4-phosphate synthase.